Consider the following 677-residue polypeptide: Methionine--tRNA ligase (677 aa).

The 'HIGH' region signature appears at 15-25 (PYANGSIHLGH). Positions 146, 149, 159, and 162 each coordinate Zn(2+). The 'KMSKS' region motif lies at 333–337 (KMSKS). Residue Lys-336 coordinates ATP. In terms of domain architecture, tRNA-binding spans 575–677 (DFAKVDLRVA…AGAKPGHQVK (103 aa)).

Belongs to the class-I aminoacyl-tRNA synthetase family. MetG type 1 subfamily. As to quaternary structure, homodimer. It depends on Zn(2+) as a cofactor.

It is found in the cytoplasm. It catalyses the reaction tRNA(Met) + L-methionine + ATP = L-methionyl-tRNA(Met) + AMP + diphosphate. Is required not only for elongation of protein synthesis but also for the initiation of all mRNA translation through initiator tRNA(fMet) aminoacylation. The sequence is that of Methionine--tRNA ligase (metG) from Escherichia coli (strain K12).